A 265-amino-acid polypeptide reads, in one-letter code: Urease accessory protein UreH (265 aa).

The protein belongs to the UreD family. As to quaternary structure, ureH, UreF and UreG form a complex that acts as a GTP-hydrolysis-dependent molecular chaperone, activating the urease apoprotein by helping to assemble the nickel containing metallocenter of UreC. The UreE protein probably delivers the nickel.

The protein localises to the cytoplasm. Required for maturation of urease via the functional incorporation of the urease nickel metallocenter. In Helicobacter pylori (strain J99 / ATCC 700824) (Campylobacter pylori J99), this protein is Urease accessory protein UreH.